A 154-amino-acid chain; its full sequence is Large ribosomal subunit protein bL17 (154 aa).

The tract at residues 125-154 (AASQKSSKQDRAKRVQGSKKNVDAVAESAE) is disordered.

This sequence belongs to the bacterial ribosomal protein bL17 family. In terms of assembly, part of the 50S ribosomal subunit. Contacts protein L32.

This Chlorobium chlorochromatii (strain CaD3) protein is Large ribosomal subunit protein bL17.